Here is a 284-residue protein sequence, read N- to C-terminus: 2-dehydro-3-deoxyphosphooctonate aldolase (284 aa).

It belongs to the KdsA family.

The protein resides in the cytoplasm. It carries out the reaction D-arabinose 5-phosphate + phosphoenolpyruvate + H2O = 3-deoxy-alpha-D-manno-2-octulosonate-8-phosphate + phosphate. The protein operates within carbohydrate biosynthesis; 3-deoxy-D-manno-octulosonate biosynthesis; 3-deoxy-D-manno-octulosonate from D-ribulose 5-phosphate: step 2/3. It participates in bacterial outer membrane biogenesis; lipopolysaccharide biosynthesis. In Photorhabdus laumondii subsp. laumondii (strain DSM 15139 / CIP 105565 / TT01) (Photorhabdus luminescens subsp. laumondii), this protein is 2-dehydro-3-deoxyphosphooctonate aldolase.